Consider the following 215-residue polypeptide: Enolase-phosphatase E1 (215 aa).

Positions 11 and 13 each coordinate Mg(2+). Residues 117–118 and lysine 151 each bind substrate; that span reads SS. Aspartate 174 is a binding site for Mg(2+).

It belongs to the HAD-like hydrolase superfamily. MasA/MtnC family. In terms of assembly, monomer. Requires Mg(2+) as cofactor.

The protein localises to the cytoplasm. The protein resides in the nucleus. It catalyses the reaction 5-methylsulfanyl-2,3-dioxopentyl phosphate + H2O = 1,2-dihydroxy-5-(methylsulfanyl)pent-1-en-3-one + phosphate. Its pathway is amino-acid biosynthesis; L-methionine biosynthesis via salvage pathway; L-methionine from S-methyl-5-thio-alpha-D-ribose 1-phosphate: step 3/6. The protein operates within amino-acid biosynthesis; L-methionine biosynthesis via salvage pathway; L-methionine from S-methyl-5-thio-alpha-D-ribose 1-phosphate: step 4/6. Its function is as follows. Bifunctional enzyme that catalyzes the enolization of 2,3-diketo-5-methylthiopentyl-1-phosphate (DK-MTP-1-P) into the intermediate 2-hydroxy-3-keto-5-methylthiopentenyl-1-phosphate (HK-MTPenyl-1-P), which is then dephosphorylated to form the acireductone 1,2-dihydroxy-3-keto-5-methylthiopentene (DHK-MTPene). This Schizosaccharomyces japonicus (strain yFS275 / FY16936) (Fission yeast) protein is Enolase-phosphatase E1 (utr4).